Reading from the N-terminus, the 513-residue chain is ATP synthase subunit alpha (513 aa).

Position 169–176 (169–176) interacts with ATP; the sequence is GDRQTGKT.

It belongs to the ATPase alpha/beta chains family. In terms of assembly, F-type ATPases have 2 components, CF(1) - the catalytic core - and CF(0) - the membrane proton channel. CF(1) has five subunits: alpha(3), beta(3), gamma(1), delta(1), epsilon(1). CF(0) has three main subunits: a(1), b(2) and c(9-12). The alpha and beta chains form an alternating ring which encloses part of the gamma chain. CF(1) is attached to CF(0) by a central stalk formed by the gamma and epsilon chains, while a peripheral stalk is formed by the delta and b chains.

The protein localises to the cell inner membrane. It carries out the reaction ATP + H2O + 4 H(+)(in) = ADP + phosphate + 5 H(+)(out). In terms of biological role, produces ATP from ADP in the presence of a proton gradient across the membrane. The alpha chain is a regulatory subunit. In Tolumonas auensis (strain DSM 9187 / NBRC 110442 / TA 4), this protein is ATP synthase subunit alpha.